The primary structure comprises 424 residues: MTDDQDVHLNSLDFQPISLLSFEGVAPYGPSCAQHKCHRCGPVLIDPGTCVYNNASMVLDNGAWAFHPGSYSTDLVANRSVEFLGDAIKAGEPFFLGVTPIAPHAETVGDAFEAPVPAKRHENLFLDVKVPRSPSFNAGAAGAVGYFRNLPKLAHDQIDYMDTFYRRRLQSLQAVDDLIEDIMAKLESHPDVLANTYLFYTSDNGYHIGQHRLPPGKTCGIEEDVNIPFIARGPGIAAGHVGRFPTSHTDLVPTIFELAGIPLRDEFDGEPMPLKGQRQSNDALNRNTYKTLRVDTDDYAFMYTVWCTNEHELYDMKMNNLYGSNSTTSSFDIPQLSARLDTLLLTLKACKGIACRRPWQTLFPTGNVNGLVDAMDPLHDSFFLVSQPRVTFTTCSLGYNAEVEGPLSPVIFGAADETAIEPRQ.

Residues aspartate 13, aspartate 203, and asparagine 204 each coordinate Ca(2+).

The protein belongs to the sulfatase family. It depends on Ca(2+) as a cofactor.

Its function is as follows. Sulfatase; part of the gene cluster that mediates the biosynthesis of pyrrolopyrazines, secondary metabolites showing insecticidal activity. The role of ppz1 within the pathway has still to be determined. The single multifunctional NRPS ppzA is sufficient to produce peramine via condensation of 1-pyrroline-5-carboxylate and arginine, N-methylation of the alpha-amino group of arginine and reduction of the thioester and the cyclization to form an iminium ion resulting in release from the peptide synthetase. Deprotonation of this intermediate and oxidation of the pyrroline ring would give rise to peramine. In Epichloe species that produce only peramine, the peramine synthetase gene is not localized in a gene cluster, in contrast to Metarhizium species that contain additional pyrrolopyrazine biosynthesis genes. The 2-oxoglutarate-Fe(II) type oxidoreductase ppzC hydroxylates peramine to yield the newly identified compound 8-hydroxyperamine whereas ppzD converts L-proline into trans-4-hydroxy-L-proline, a precursor of peramine biosynthesis. The chain is Sulfatase ppz1 from Metarhizium majus (strain ARSEF 297).